A 524-amino-acid chain; its full sequence is Na(+)/H(+) antiporter NhaB (524 aa).

9 consecutive transmembrane segments (helical) span residues 13-33, 98-118, 140-160, 239-259, 304-324, 325-345, 358-378, 448-468, and 479-499; these read FLGN…IINP, LLLV…LFVF, AFLS…SVSV, FFIR…LVCL, AIIG…VGLV, GLSV…HSLG, LTVF…TPII, ATPN…APLI, and ALPY…FLLV.

Belongs to the NhaB Na(+)/H(+) (TC 2.A.34) antiporter family.

It is found in the cell inner membrane. The catalysed reaction is 2 Na(+)(in) + 3 H(+)(out) = 2 Na(+)(out) + 3 H(+)(in). In terms of biological role, na(+)/H(+) antiporter that extrudes sodium in exchange for external protons. This Yersinia pseudotuberculosis serotype I (strain IP32953) protein is Na(+)/H(+) antiporter NhaB.